A 313-amino-acid polypeptide reads, in one-letter code: Ubiquinone biosynthesis protein COQ4, mitochondrial (313 aa).

Positions 197, 198, 201, and 213 each coordinate Zn(2+). The segment at Gln290 to Asn313 is disordered. The segment covering Lys303–Asn313 has biased composition (basic and acidic residues).

The protein belongs to the COQ4 family. Component of a multi-subunit COQ enzyme complex, composed of at least COQ3, COQ4, COQ5, COQ6, COQ7 and COQ9. Requires Zn(2+) as cofactor.

It localises to the mitochondrion inner membrane. It carries out the reaction a 4-hydroxy-3-methoxy-5-(all-trans-polyprenyl)benzoate + H(+) = a 2-methoxy-6-(all-trans-polyprenyl)phenol + CO2. Its pathway is cofactor biosynthesis; ubiquinone biosynthesis. Lyase that catalyzes the C1-decarboxylation of 4-hydroxy-3-methoxy-5-(all-trans-polyprenyl)benzoic acid into 2-methoxy-6-(all-trans-polyprenyl)phenol during ubiquinone biosynthesis. This is Ubiquinone biosynthesis protein COQ4, mitochondrial from Meyerozyma guilliermondii (strain ATCC 6260 / CBS 566 / DSM 6381 / JCM 1539 / NBRC 10279 / NRRL Y-324) (Yeast).